Consider the following 724-residue polypeptide: Acyl-coenzyme A oxidase 2 (724 aa).

A disordered region spans residues 1 to 48 (MAMLSQPNDGHDHPEKKDPDTTPKQVAGVISSQDPPHPAKDVAEERAR). Composition is skewed to basic and acidic residues over residues 9–21 (DGHD…DPDT) and 37–48 (HPAKDVAEERAR).

It belongs to the acyl-CoA oxidase family. Requires FAD as cofactor.

The protein localises to the peroxisome. The enzyme catalyses a 2,3-saturated acyl-CoA + O2 = a (2E)-enoyl-CoA + H2O2. It functions in the pathway lipid metabolism; peroxisomal fatty acid beta-oxidation. This chain is Acyl-coenzyme A oxidase 2 (POX2), found in Candida tropicalis (Yeast).